Here is a 541-residue protein sequence, read N- to C-terminus: Man(5)GlcNAc(2)-PP-dolichol translocation protein RFT1 (541 aa).

11 consecutive transmembrane segments (helical) span residues 16–36 (SGLL…AFIL), 45–62 (GIVN…TFLA), 85–105 (LLWL…WVWL), 123–143 (VLFF…WVLA), 154–176 (LAES…WLPH), 187–207 (LLYT…LLRS), 335–355 (LALL…QLAL), 376–396 (CLYV…FAAM), 414–434 (SFLV…FIMA), 470–490 (VLLG…AFLC), and 499–519 (LAHI…AFLT).

The protein belongs to the RFT1 family.

Its subcellular location is the endoplasmic reticulum membrane. The protein operates within protein modification; protein glycosylation. Functionally, intramembrane glycolipid transporter that operates in the biosynthetic pathway of dolichol-linked oligosaccharides, the glycan precursors employed in protein asparagine (N)-glycosylation. The sequential addition of sugars to dolichol pyrophosphate produces dolichol-linked oligosaccharides containing fourteen sugars, including two GlcNAcs, nine mannoses and three glucoses. Once assembled, the oligosaccharide is transferred from the lipid to nascent proteins by oligosaccharyltransferases. The assembly of dolichol-linked oligosaccharides begins on the cytosolic side of the endoplasmic reticulum membrane and finishes in its lumen. RFT1 could mediate the translocation of the cytosolically oriented intermediate DolPP-GlcNAc2Man5, produced by ALG11, into the ER lumen where dolichol-linked oligosaccharides assembly continues. However, the intramembrane lipid transporter activity could not be confirmed in vitro. The sequence is that of Man(5)GlcNAc(2)-PP-dolichol translocation protein RFT1 from Mus musculus (Mouse).